We begin with the raw amino-acid sequence, 258 residues long: Ribosomal RNA small subunit methyltransferase J (258 aa).

Residues 111-112 (RD), 127-128 (ER), and Asp-179 each bind S-adenosyl-L-methionine.

It belongs to the methyltransferase superfamily. RsmJ family.

Its subcellular location is the cytoplasm. It catalyses the reaction guanosine(1516) in 16S rRNA + S-adenosyl-L-methionine = N(2)-methylguanosine(1516) in 16S rRNA + S-adenosyl-L-homocysteine + H(+). In terms of biological role, specifically methylates the guanosine in position 1516 of 16S rRNA. This chain is Ribosomal RNA small subunit methyltransferase J, found in Alteromonas mediterranea (strain DSM 17117 / CIP 110805 / LMG 28347 / Deep ecotype).